The primary structure comprises 314 residues: Dihydroorotate dehydrogenase (fumarate) (314 aa).

Residues K46, 70–74 (NSMGL), and N130 each bind substrate. Position 46-47 (46-47 (KS)) interacts with FMN. Position 130 (N130) interacts with FMN. Active-site nucleophile residues include S132 and C133. Positions 167 and 195 each coordinate FMN. 196–197 (NS) serves as a coordination point for substrate. FMN is bound by residues G224, 252–253 (GG), and 274–275 (GT).

Belongs to the dihydroorotate dehydrogenase family. Type 1 subfamily. Homodimer. FMN is required as a cofactor.

Its subcellular location is the cytoplasm. It carries out the reaction (S)-dihydroorotate + fumarate = orotate + succinate. The protein operates within pyrimidine metabolism; UMP biosynthesis via de novo pathway. With respect to regulation, the activity is independent of the presence of oxygen. Catalyzes the conversion of dihydroorotate to orotate with fumarate as the electron acceptor. In Lachancea kluyveri (strain ATCC 58438 / CBS 3082 / BCRC 21498 / NBRC 1685 / JCM 7257 / NCYC 543 / NRRL Y-12651) (Yeast), this protein is Dihydroorotate dehydrogenase (fumarate) (URA1).